The chain runs to 83 residues: Small ribosomal subunit protein bS16 (83 aa).

This sequence belongs to the bacterial ribosomal protein bS16 family.

This chain is Small ribosomal subunit protein bS16, found in Aromatoleum aromaticum (strain DSM 19018 / LMG 30748 / EbN1) (Azoarcus sp. (strain EbN1)).